Reading from the N-terminus, the 215-residue chain is Sodium channel regulatory subunit beta-2 (215 aa).

The signal sequence occupies residues 1-29 (MHRDAWLPRPAFSLTGLSLFFSLVPPGRS). Residues 30 to 157 (MEVTAPTTLS…LEVPPERDST (128 aa)) are Extracellular-facing. Residues 32–154 (VTAPTTLSVL…QVLLEVPPER (123 aa)) enclose the Ig-like C2-type domain. N-linked (GlcNAc...) asparagine glycosylation is found at asparagine 42, asparagine 66, and asparagine 74. 2 disulfide bridges follow: cysteine 50–cysteine 127 and cysteine 72–cysteine 75. The helical transmembrane segment at 158 to 179 (VAVIVGASVGGFLAVVILVLMV) threads the bilayer. Residues 180 to 215 (VKCVRRKKEQKLSTDDLKTEEEGKMDGEGNAEDGTK) are Cytoplasmic-facing. The segment at 188 to 215 (EQKLSTDDLKTEEEGKMDGEGNAEDGTK) is disordered. Residues 189-215 (QKLSTDDLKTEEEGKMDGEGNAEDGTK) show a composition bias toward basic and acidic residues. Serine 192 bears the Phosphoserine mark.

This sequence belongs to the sodium channel auxiliary subunit SCN2B (TC 8.A.17) family. In terms of assembly, a voltage-gated sodium (Nav) channel consists of an ion-conducting pore-forming alpha subunit functional on its own that is regulated by one or more beta subunits. The beta subunit SCN2B is disulfide-linked to the pore-forming alpha subunit. Interacts with SCN1A; regulatory subunit of SCN1A/Nav1.1. Interacts with SCN2A; regulatory subunit of SCN2A/Nav1.2. Interacts with SCN3A; regulatory subunit of SCN3A/Nav1.3. Interacts with SCN5A; regulatory subunit of SCN5A/Nav1.5. Interacts with SCN8A; regulatory subunit of SCN8A/Nav1.6. Interacts with SCN9A; regulatory subunit of SCN9A/Nav1.7. Interacts with SCN10A; regulatory subunit of SCN10A/Nav1.8. Interacts with TNR; may play a crucial role in clustering and regulation of activity of SCN2B-containing Nav channels at nodes of Ranvier.

It localises to the cell membrane. Its subcellular location is the cell projection. The protein localises to the axon. Functionally, regulatory subunit of multiple voltage-gated sodium (Nav) channels directly mediating the depolarization of excitable membranes. Navs, also called VGSCs (voltage-gated sodium channels) or VDSCs (voltage-dependent sodium channels), operate by switching between closed and open conformations depending on the voltage difference across the membrane. In the open conformation they allow Na(+) ions to selectively pass through the pore, along their electrochemical gradient. The influx of Na+ ions provokes membrane depolarization, initiating the propagation of electrical signals throughout cells and tissues. The accessory beta subunits participate in localization and functional modulation of the Nav channels. Modulates the activity of SCN1A/Nav1.1, SCN2A/Nav1.2, SCN2A/Nav1.3, SCN5A/Nav1.5, SCN8A/Nav1.6, SCN9A/Nav1.7 and SCN10A/Nav1.8. The protein is Sodium channel regulatory subunit beta-2 of Mus musculus (Mouse).